A 1662-amino-acid chain; its full sequence is Cortactin-binding protein 2 (1662 aa).

4 disordered regions span residues methionine 1–alanine 23, lysine 202–threonine 235, isoleucine 365–glycine 439, and glycine 453–serine 477. Residues arginine 118–lysine 275 are a coiled coil. Residues proline 385–serine 395 are compositionally biased toward low complexity. Residues alanine 404–alanine 421 are compositionally biased toward polar residues. Position 497 is an asymmetric dimethylarginine (arginine 497). Positions phenylalanine 498–serine 615 are disordered. Polar residues-rich tracts occupy residues aspartate 516–lysine 529 and threonine 582–glutamine 592. 5 ANK repeats span residues glycine 708–tyrosine 738, aspartate 742–alanine 771, asparagine 775–histidine 804, glycine 808–valine 837, and aspartate 841–glycine 870. The tract at residues asparagine 871 to lysine 897 is disordered. The segment covering serine 874–serine 891 has biased composition (acidic residues). The stretch at glutamate 911 to arginine 941 is one ANK 6 repeat. The interval lysine 1446–tryptophan 1473 is disordered. Position 1523 is a phosphoserine (serine 1523). Residues valine 1614–lysine 1662 form a disordered region. Positions serine 1623–glutamine 1637 are enriched in low complexity. Over residues serine 1644 to lysine 1662 the composition is skewed to basic and acidic residues.

Interacts with CTTN/cortactin SH3 domain. Interacts with STRN, STRN4/zinedin and MOB4/phocein; this interactions mediate the association with the STRIPAK core complex and may regulate dendritic spine distribution of the STRIPAK complex in hippocampal neurons. Activation of glutamate receptors weakens the interaction with STRN and STRN4.

It localises to the cytoplasm. The protein resides in the cell cortex. Its subcellular location is the cell projection. It is found in the dendritic spine. In terms of biological role, regulates the dendritic spine distribution of CTTN/cortactin in hippocampal neurons, and thus controls dendritic spinogenesis and dendritic spine maintenance. Associates with the striatin-interacting phosphatase and kinase (STRIPAK) core complex to regulate dendritic spine distribution of the STRIPAK complex in hippocampal neurons. The protein is Cortactin-binding protein 2 (CTTNBP2) of Callithrix jacchus (White-tufted-ear marmoset).